Here is a 321-residue protein sequence, read N- to C-terminus: L-carnitine dehydrogenase (321 aa).

Position 7–12 (7–12 (GTGVIG)) interacts with NAD(+).

Belongs to the 3-hydroxyacyl-CoA dehydrogenase family. L-carnitine dehydrogenase subfamily. As to quaternary structure, homodimer.

It localises to the cytoplasm. It carries out the reaction carnitine + NAD(+) = 3-dehydrocarnitine + NADH + H(+). It participates in amine and polyamine metabolism; carnitine metabolism. Catalyzes the NAD(+)-dependent oxidation of L-carnitine to 3-dehydrocarnitine. The sequence is that of L-carnitine dehydrogenase from Staphylococcus epidermidis (strain ATCC 12228 / FDA PCI 1200).